Reading from the N-terminus, the 735-residue chain is Catalase-peroxidase (735 aa).

The segment at residues 95–223 (WHSAGTYRTG…LAAVQMGLIY (129 aa)) is a cross-link (tryptophyl-tyrosyl-methioninium (Trp-Tyr) (with M-249)). The Proton acceptor role is filled by H96. The tryptophyl-tyrosyl-methioninium (Tyr-Met) (with W-95) cross-link spans 223–249 (YVNPEGPDGVPDPIKSGIDIRETFARM). H264 contacts heme b.

It belongs to the peroxidase family. Peroxidase/catalase subfamily. Homodimer or homotetramer. It depends on heme b as a cofactor. Formation of the three residue Trp-Tyr-Met cross-link is important for the catalase, but not the peroxidase activity of the enzyme.

It carries out the reaction H2O2 + AH2 = A + 2 H2O. It catalyses the reaction 2 H2O2 = O2 + 2 H2O. Bifunctional enzyme with both catalase and broad-spectrum peroxidase activity. The sequence is that of Catalase-peroxidase from Aliarcobacter butzleri (strain RM4018) (Arcobacter butzleri).